Reading from the N-terminus, the 211-residue chain is Ubiquitin-conjugating enzyme E2 S-C (211 aa).

The UBC core domain occupies 11-157 (HIIRRVYKEV…AKLMTEIHAQ (147 aa)). The active-site Glycyl thioester intermediate is the Cys-95. The tract at residues 158-211 (GSTLRGKDPTDPCSSASATVVSGDGPMAKKHAGDRDKKLAAKKKTDKKRALRRL) is disordered. The span at 197-211 (AAKKKTDKKRALRRL) shows a compositional bias: basic residues.

The protein belongs to the ubiquitin-conjugating enzyme family.

The catalysed reaction is S-ubiquitinyl-[E1 ubiquitin-activating enzyme]-L-cysteine + [E2 ubiquitin-conjugating enzyme]-L-cysteine = [E1 ubiquitin-activating enzyme]-L-cysteine + S-ubiquitinyl-[E2 ubiquitin-conjugating enzyme]-L-cysteine.. The protein operates within protein modification; protein ubiquitination. In terms of biological role, catalyzes the covalent attachment of ubiquitin to other proteins. Acts as an essential factor of the anaphase promoting complex/cyclosome (APC/C), a cell cycle-regulated ubiquitin ligase that controls progression through mitosis. Acts by specifically elongating 'Lys-11'-linked polyubiquitin chains initiated by the E2 enzyme ube2c/ubch10 on APC/C substrates, enhancing the degradation of APC/C substrates by the proteasome and promoting mitotic exit. The sequence is that of Ubiquitin-conjugating enzyme E2 S-C (ube2s-c) from Xenopus laevis (African clawed frog).